The sequence spans 106 residues: UPF0145 protein GSU2791 (106 aa).

This sequence belongs to the UPF0145 family.

This is UPF0145 protein GSU2791 from Geobacter sulfurreducens (strain ATCC 51573 / DSM 12127 / PCA).